Consider the following 533-residue polypeptide: Probable dolichyl pyrophosphate Man9GlcNAc2 alpha-1,3-glucosyltransferase (533 aa).

The interval 1–20 is disordered; that stretch reads MPKKKPAKHSGEDDITIPVS. 9 helical membrane-spanning segments follow: residues 42-64, 149-169, 184-204, 214-234, 264-284, 360-380, 422-442, 463-483, and 491-511; these read FLCI…YSGA, WTVL…FVLV, WHIA…GHFQ, VGAI…LFSL, ILSV…FWWP, GFLY…FQVH, LLIP…SPGN, VFLL…YLTI, and FLFE…FAFY.

This sequence belongs to the ALG6/ALG8 glucosyltransferase family.

It is found in the endoplasmic reticulum membrane. The catalysed reaction is an alpha-D-Man-(1-&gt;2)-alpha-D-Man-(1-&gt;2)-alpha-D-Man-(1-&gt;3)-[alpha-D-Man-(1-&gt;2)-alpha-D-Man-(1-&gt;3)-[alpha-D-Man-(1-&gt;2)-alpha-D-Man-(1-&gt;6)]-alpha-D-Man-(1-&gt;6)]-beta-D-Man-(1-&gt;4)-beta-D-GlcNAc-(1-&gt;4)-alpha-D-GlcNAc-diphospho-di-trans,poly-cis-dolichol + a di-trans,poly-cis-dolichyl beta-D-glucosyl phosphate = an alpha-D-Glc-(1-&gt;3)-alpha-D-Man-(1-&gt;2)-alpha-D-Man-(1-&gt;2)-alpha-D-Man-(1-&gt;3)-[alpha-D-Man-(1-&gt;2)-alpha-D-Man-(1-&gt;3)-[alpha-D-Man-(1-&gt;2)-alpha-D-Man-(1-&gt;6)]-alpha-D-Man-(1-&gt;6)]-beta-D-Man-(1-&gt;4)-beta-D-GlcNAc-(1-&gt;4)-alpha-D-GlcNAc-diphospho-di-trans,poly-cis-dolichol + a di-trans,poly-cis-dolichyl phosphate + H(+). The protein operates within protein modification; protein glycosylation. Its function is as follows. Adds the first glucose residue to the lipid-linked oligosaccharide precursor for N-linked glycosylation. Transfers glucose from dolichyl phosphate glucose (Dol-P-Glc) onto the lipid-linked oligosaccharide Man(9)GlcNAc(2)-PP-Dol. This chain is Probable dolichyl pyrophosphate Man9GlcNAc2 alpha-1,3-glucosyltransferase, found in Arabidopsis thaliana (Mouse-ear cress).